The sequence spans 82 residues: Small ribosomal subunit protein uS17 (82 aa).

The protein belongs to the universal ribosomal protein uS17 family. In terms of assembly, part of the 30S ribosomal subunit.

In terms of biological role, one of the primary rRNA binding proteins, it binds specifically to the 5'-end of 16S ribosomal RNA. In Thermosynechococcus vestitus (strain NIES-2133 / IAM M-273 / BP-1), this protein is Small ribosomal subunit protein uS17.